The chain runs to 679 residues: Single-strand DNA endonuclease ASTE1 (679 aa).

An interaction with SHLD2 region spans residues 351 to 400 (TILPTQVENMQQPNAHRISQPIRQIIYGLLLNASPHLDKTSWNALPPQPL). A disordered region spans residues 625–645 (RSNSKKKRQKKQNTSCSKNRG). Residues 626-635 (SNSKKKRQKK) show a composition bias toward basic residues.

It belongs to the asteroid family. As to quaternary structure, interacts with SHLD1, SHLD2, SHLD3, RIF1 and MAD2L2/REV7.

Structure-specific DNA endonuclease that specifically cleaves single-stranded DNA and 3' overhang DNA. Contributes to the control of DNA double-strand break repair choice by antagonizing BRCA1-dependent homologous recombination (HR) and promoting non-homologous end-joining (NHEJ). Recruited to the single-stranded DNA ends by SHLD2 and cleaves the 3' exposed DNA ends, therefore inhibiting DNA end resection (necessary for HR) and promoting DNA end protection (necessary for NHEJ). The protein is Single-strand DNA endonuclease ASTE1 (ASTE1) of Pongo abelii (Sumatran orangutan).